The primary structure comprises 409 residues: N-acetylglucosamine-6-phosphate deacetylase (409 aa).

An a divalent metal cation-binding site is contributed by glutamate 143. 154 to 155 (AH) serves as a coordination point for substrate. Residues histidine 211 and histidine 232 each contribute to the a divalent metal cation site. Residues 235–236 (NA), arginine 243, and 269–272 (DGIH) each bind substrate. The active-site Proton donor/acceptor is aspartate 294. Substrate is bound at residue 328–330 (LSG).

The protein belongs to the metallo-dependent hydrolases superfamily. NagA family. A divalent metal cation is required as a cofactor.

It catalyses the reaction N-acetyl-D-glucosamine 6-phosphate + H2O = D-glucosamine 6-phosphate + acetate. It participates in amino-sugar metabolism; N-acetylneuraminate degradation. In terms of biological role, hydrolyzes the N-glycolyl group from N-glycolylglucosamine 6-phosphate (GlcNGc-6-P) in the N-glycolylneuraminic acid (Neu5Gc) degradation pathway. The polypeptide is N-acetylglucosamine-6-phosphate deacetylase (Amdhd2) (Rattus norvegicus (Rat)).